We begin with the raw amino-acid sequence, 282 residues long: D-arabinitol 2-dehydrogenase [ribulose-forming] (282 aa).

NADP(+) is bound by residues Leu-32 and Asn-53. Ser-170 serves as the catalytic Proton donor. Tyr-185, Lys-189, Ile-218, and Thr-220 together coordinate NADP(+). The active-site Proton acceptor is Tyr-185. Lys-189 acts as the Lowers pKa of active site Tyr in catalysis.

Belongs to the short-chain dehydrogenases/reductases (SDR) family.

It catalyses the reaction D-arabinitol + NAD(+) = D-ribulose + NADH + H(+). The protein operates within carbohydrate metabolism; D-arabinitol metabolism. In terms of biological role, catalyzes the NAD(+)-dependent oxidation of D-arabinitol at carbon 4 to produce D-ribulose. The chain is D-arabinitol 2-dehydrogenase [ribulose-forming] (ARD) from Candida tropicalis (Yeast).